A 1155-amino-acid polypeptide reads, in one-letter code: Protein BREAST CANCER SUSCEPTIBILITY 2 homolog B (1155 aa).

4 BRCA2 repeats span residues 63 to 97, 116 to 150, 163 to 197, and 257 to 291; these read MPGEIPMFRTGLGKSVVLKESSIAKAKSILAENVA, TAETMPMFRTALGKTVPLKESSIAKPLSILGSDMI, FGVPNSLFQTASNKKVNVSSAGLARAKALLGLEED, and LKVPPTKFQTAGGKSLSVSAEALKRARNLLGDPEL.

Interacts with RAD51 and DMC1. Interacts with DSS1(I) and DSS1(V). Can interact with both RAD51 and DSS1(I) or both DMC1 and DSS1(I) in a tripartite complex. Expressed in flower buds.

Functionally, involved in double-strand break repair and/or homologous recombination by mediating RAD51- and DMC1-facilitated DNA repair. Plays an essential role in both somatic and meiotic homologous recombination. Is crucial for the formation of RAD51 and DMC1 foci during male meiotic homologous recombination in prophase I. The protein is Protein BREAST CANCER SUSCEPTIBILITY 2 homolog B of Arabidopsis thaliana (Mouse-ear cress).